The chain runs to 254 residues: Dihydroorotate dehydrogenase B (NAD(+)), electron transfer subunit (254 aa).

Residues 1–99 form the FAD-binding FR-type domain; sequence MLQTEMKVIQ…LGPLGKGFDI (99 aa). Residues 50-53, 67-69, and 74-75 contribute to the FAD site; these read RPIS, LYR, and GT. Cys218, Cys223, Cys226, and Cys241 together coordinate [2Fe-2S] cluster.

Belongs to the PyrK family. Heterotetramer of 2 PyrK and 2 PyrD type B subunits. Requires [2Fe-2S] cluster as cofactor. FAD is required as a cofactor.

It participates in pyrimidine metabolism; UMP biosynthesis via de novo pathway; orotate from (S)-dihydroorotate (NAD(+) route): step 1/1. In terms of biological role, responsible for channeling the electrons from the oxidation of dihydroorotate from the FMN redox center in the PyrD type B subunit to the ultimate electron acceptor NAD(+). This is Dihydroorotate dehydrogenase B (NAD(+)), electron transfer subunit from Listeria welshimeri serovar 6b (strain ATCC 35897 / DSM 20650 / CCUG 15529 / CIP 8149 / NCTC 11857 / SLCC 5334 / V8).